The primary structure comprises 84 residues: Large ribosomal subunit protein bL27 (84 aa).

The tract at residues 1–29 (MAHKKGGGSTKNGRDSNPKYLGIKASGGS) is disordered.

It belongs to the bacterial ribosomal protein bL27 family.

This is Large ribosomal subunit protein bL27 from Chlorobium phaeobacteroides (strain BS1).